Consider the following 537-residue polypeptide: Putative cysteine ligase BshC (537 aa).

A coiled-coil region spans residues 422–450; sequence IEKVEGMIEQQRRLNKDLLDEVAGNQNNI.

This sequence belongs to the BshC family.

Its function is as follows. Involved in bacillithiol (BSH) biosynthesis. May catalyze the last step of the pathway, the addition of cysteine to glucosamine malate (GlcN-Mal) to generate BSH. In Staphylococcus aureus (strain COL), this protein is Putative cysteine ligase BshC.